A 211-amino-acid chain; its full sequence is Large ribosomal subunit protein uL3 (211 aa).

This sequence belongs to the universal ribosomal protein uL3 family. As to quaternary structure, part of the 50S ribosomal subunit. Forms a cluster with proteins L14 and L19.

Functionally, one of the primary rRNA binding proteins, it binds directly near the 3'-end of the 23S rRNA, where it nucleates assembly of the 50S subunit. The chain is Large ribosomal subunit protein uL3 from Geobacter sp. (strain M21).